The chain runs to 508 residues: Photosystem II CP47 reaction center protein (508 aa).

The next 6 membrane-spanning stretches (helical) occupy residues 21-36, 101-115, 140-156, 203-218, 237-252, and 457-472; these read SVHIMHTALVSGWAGS, IVFSGLCFLAAIWHW, GIHLFLSGVTCFGFGAF, IAAGTLGILAGLFHLS, VLSSSIAAVFFAAFVV, and TFALLFFFGHIWHGAR.

It belongs to the PsbB/PsbC family. PsbB subfamily. In terms of assembly, PSII is composed of 1 copy each of membrane proteins PsbA, PsbB, PsbC, PsbD, PsbE, PsbF, PsbH, PsbI, PsbJ, PsbK, PsbL, PsbM, PsbT, PsbX, PsbY, PsbZ, Psb30/Ycf12, at least 3 peripheral proteins of the oxygen-evolving complex and a large number of cofactors. It forms dimeric complexes. It depends on Binds multiple chlorophylls. PSII binds additional chlorophylls, carotenoids and specific lipids. as a cofactor.

The protein localises to the plastid. The protein resides in the chloroplast thylakoid membrane. One of the components of the core complex of photosystem II (PSII). It binds chlorophyll and helps catalyze the primary light-induced photochemical processes of PSII. PSII is a light-driven water:plastoquinone oxidoreductase, using light energy to abstract electrons from H(2)O, generating O(2) and a proton gradient subsequently used for ATP formation. In Drimys granadensis, this protein is Photosystem II CP47 reaction center protein.